We begin with the raw amino-acid sequence, 366 residues long: Palmitoyltransferase ZDHHC2 (366 aa).

At 1–15 (MAPSGSGGVRRRCRR) the chain is on the cytoplasmic side. A helical membrane pass occupies residues 16–36 (VLYWIPVVFISLLLGWSYYAY). Over 37–47 (AIQLCIVSMEN) the chain is Lumenal. A helical transmembrane segment spans residues 48 to 68 (IGEQVVCLMAYHLLFAMFVWS). At 69-169 (YWKTIFTLPM…NNCVGFSNYK (101 aa)) the chain is on the cytoplasmic side. A DHHC domain is found at 126-176 (RYCDRCQLIKPDRCHHCSVCDKCILKMDHHCPWVNNCVGFSNYKFFLLFLA). Cys-156 (S-palmitoyl cysteine intermediate) is an active-site residue. The helical transmembrane segment at 170-190 (FFLLFLAYSLLYCLFIAATDL) threads the bilayer. At 191 to 207 (QYFIRFWTNGLPDTQAK) the chain is on the lumenal side. A helical transmembrane segment spans residues 208–228 (FHIMFLFFAAAMFSVSLSSLF). Residues 229–366 (GYHCWLVSKN…NPALTMENET (138 aa)) are Cytoplasmic-facing. A compositionally biased stretch (polar residues) spans 297-316 (VNQDPEQPSTPAGLNSTVKN). Positions 297 to 366 (VNQDPEQPST…NPALTMENET (70 aa)) are disordered. The interval 298 to 366 (NQDPEQPSTP…NPALTMENET (69 aa)) is mediates localization to plasma membrane and recycling endosomes. Residues 326–336 (PLRESQSHLLK) are compositionally biased toward basic and acidic residues. The Non-canonical dileucine endocytic signal signature appears at 334–335 (LL). A compositionally biased stretch (polar residues) spans 337–347 (DSQTWTESSAN). The short motif at 357–360 (NPAL) is the NPxY-like endocytic signal element.

The protein belongs to the DHHC palmitoyltransferase family. Monomer. Homodimer. The monomeric form has a higher catalytic activity. In terms of processing, autopalmitoylated. As to expression, expressed in all brain regions.

Its subcellular location is the postsynaptic density. The protein localises to the postsynaptic recycling endosome membrane. It localises to the cell membrane. The protein resides in the endoplasmic reticulum membrane. It is found in the golgi apparatus membrane. The enzyme catalyses L-cysteinyl-[protein] + hexadecanoyl-CoA = S-hexadecanoyl-L-cysteinyl-[protein] + CoA. It carries out the reaction L-cysteinyl-[protein] + tetradecanoyl-CoA = S-tetradecanoyl-L-cysteinyl-[protein] + CoA. It catalyses the reaction L-cysteinyl-[protein] + octadecanoyl-CoA = S-octadecanoyl-L-cysteinyl-[protein] + CoA. Its function is as follows. Palmitoyltransferase that catalyzes the addition of palmitate onto various protein substrates and is involved in a variety of cellular processes. Has no stringent fatty acid selectivity and in addition to palmitate can also transfer onto target proteins myristate from tetradecanoyl-CoA and stearate from octadecanoyl-CoA. In the nervous system, plays a role in long term synaptic potentiation by palmitoylating AKAP5 through which it regulates protein trafficking from the dendritic recycling endosomes to the plasma membrane and controls both structural and functional plasticity at excitatory synapses. In dendrites, mediates the palmitoylation of DLG4 when synaptic activity decreases and induces synaptic clustering of DLG4 and associated AMPA-type glutamate receptors. Also mediates the de novo and turnover palmitoylation of RGS7BP, a shuttle for Gi/o-specific GTPase-activating proteins/GAPs, promoting its localization to the plasma membrane in response to the activation of G protein-coupled receptors. Through the localization of these GTPase-activating proteins/GAPs, it also probably plays a role in G protein-coupled receptors signaling in neurons. Also probably plays a role in cell adhesion by palmitoylating CD9 and CD151 to regulate their expression and function. Palmitoylates the endoplasmic reticulum protein CKAP4 and regulates its localization to the plasma membrane. Could also palmitoylate LCK and regulate its localization to the plasma membrane. The protein is Palmitoyltransferase ZDHHC2 of Mus musculus (Mouse).